Reading from the N-terminus, the 984-residue chain is Rhoptry neck protein 4 (984 aa).

Positions 1-26 (MAIKNTLTGSGLLVLLTLACGTTVQS) are cleaved as a signal peptide. A disordered region spans residues 24-300 (VQSSPPTPAP…TPIPASKGIY (277 aa)). 2 stretches are compositionally biased toward polar residues: residues 66–85 (PQKTASQSSLAPTGDNNSKV) and 92–105 (SDTTPRSAEGTSES). N-linked (GlcNAc...) asparagine glycosylation occurs at Asn81. Residues 106 to 117 (PPVPQLGTPPRP) show a composition bias toward pro residues. Copy 1 of the repeat occupies 129–172 (QPPTAAPRTSRSVDTGSGSDASTEQQAGGQKVVTPIPASKGIYP). A compositionally biased stretch (polar residues) spans 135–156 (PRTSRSVDTGSGSDASTEQQAG). Residues 214–228 (TGRRRAKARNRKRHP) are compositionally biased toward basic residues. Polar residues predominate over residues 242–285 (QPPTTASRPSNGEGESQPPTAAPRTSRSVDTGSGSDASTEQQAG). Repeat 2 spans residues 258 to 301 (QPPTAAPRTSRSVDTGSGSDASTEQQAGGQKVVTPIPASKGIYP). Asn390 and Asn780 each carry an N-linked (GlcNAc...) asparagine glycan. The segment at 882–984 (GPTVSDESRR…EESTSKTSEL (103 aa)) is disordered. Residues 892–901 (MIHPVRHRSR) are compositionally biased toward basic residues. Low complexity predominate over residues 902–914 (TAPSSEAASTAAE). Residue Asn925 is glycosylated (N-linked (GlcNAc...) asparagine). Residues 967 to 984 (LKQSDTLIEESTSKTSEL) show a composition bias toward polar residues.

The protein localises to the secreted. It is found in the parasitophorous vacuole membrane. In Toxoplasma gondii, this protein is Rhoptry neck protein 4 (RON4).